A 96-amino-acid polypeptide reads, in one-letter code: Phosphoribosyl-ATP pyrophosphatase (96 aa).

It belongs to the PRA-PH family.

It is found in the cytoplasm. It catalyses the reaction 1-(5-phospho-beta-D-ribosyl)-ATP + H2O = 1-(5-phospho-beta-D-ribosyl)-5'-AMP + diphosphate + H(+). It participates in amino-acid biosynthesis; L-histidine biosynthesis; L-histidine from 5-phospho-alpha-D-ribose 1-diphosphate: step 2/9. The protein is Phosphoribosyl-ATP pyrophosphatase of Methanococcus aeolicus (strain ATCC BAA-1280 / DSM 17508 / OCM 812 / Nankai-3).